A 283-amino-acid chain; its full sequence is Octanoyl-[GcvH]:protein N-octanoyltransferase (283 aa).

A BPL/LPL catalytic domain is found at 42 to 248; sequence GQSDAVVRTW…TLQSFGGELY (207 aa). The Acyl-thioester intermediate role is filled by cysteine 147.

Belongs to the octanoyltransferase LipL family.

It catalyses the reaction N(6)-octanoyl-L-lysyl-[glycine-cleavage complex H protein] + L-lysyl-[lipoyl-carrier protein] = N(6)-octanoyl-L-lysyl-[lipoyl-carrier protein] + L-lysyl-[glycine-cleavage complex H protein]. It functions in the pathway protein modification; protein lipoylation via endogenous pathway; protein N(6)-(lipoyl)lysine from octanoyl-[acyl-carrier-protein]. In terms of biological role, catalyzes the amidotransfer (transamidation) of the octanoyl moiety from octanoyl-GcvH to the lipoyl domain of the E2 subunit of lipoate-dependent enzymes. This Geobacillus kaustophilus (strain HTA426) protein is Octanoyl-[GcvH]:protein N-octanoyltransferase.